Reading from the N-terminus, the 563-residue chain is Light-independent protochlorophyllide reductase subunit B (563 aa).

Aspartate 36 lines the [4Fe-4S] cluster pocket. Aspartate 293 acts as the Proton donor in catalysis. Residue 437–438 (GM) participates in substrate binding. The interval 459–478 (ERREAEFGNQKVETGEPGTG) is disordered.

This sequence belongs to the ChlB/BchB/BchZ family. Protochlorophyllide reductase is composed of three subunits; BchL, BchN and BchB. Forms a heterotetramer of two BchB and two BchN subunits. The cofactor is [4Fe-4S] cluster.

It catalyses the reaction chlorophyllide a + oxidized 2[4Fe-4S]-[ferredoxin] + 2 ADP + 2 phosphate = protochlorophyllide a + reduced 2[4Fe-4S]-[ferredoxin] + 2 ATP + 2 H2O. It participates in porphyrin-containing compound metabolism; bacteriochlorophyll biosynthesis (light-independent). Its function is as follows. Component of the dark-operative protochlorophyllide reductase (DPOR) that uses Mg-ATP and reduced ferredoxin to reduce ring D of protochlorophyllide (Pchlide) to form chlorophyllide a (Chlide). This reaction is light-independent. The NB-protein (BchN-BchB) is the catalytic component of the complex. This chain is Light-independent protochlorophyllide reductase subunit B, found in Roseiflexus castenholzii (strain DSM 13941 / HLO8).